A 161-amino-acid chain; its full sequence is Putative defense protein 2 (161 aa).

The N-terminal stretch at 1 to 11 (LSWSALALTSA) is a signal peptide. The region spanning 12–161 (YPTGAPTSAC…SAPVKILSHH (150 aa)) is the Reelin domain. Cysteine 21 and cysteine 98 form a disulfide bridge. Asparagine 91 is a glycosylation site (N-linked (GlcNAc...) asparagine).

This sequence belongs to the insect defense protein family.

The protein localises to the secreted. Functionally, may have antimicrobial activity. In Antheraea mylitta (Tasar silkworm), this protein is Putative defense protein 2.